Consider the following 436-residue polypeptide: MDTIFAVSSGLLPSGVAVIRLSGPHVINIVKALCGHLPKARLMHYGNLTARDGSFLDSALTVFFPAPHSFTGEDCAEFHLHGSKAVVNRFLDELSTFDGCRSAEAGEFSRRAFMEGKLDLIQAESLADLIEAETESQRRLAVMGTSGRLTTLYRDWRNRLIKARAFIEAELDFSDEADVSDLISDKVWEDVEELCISIRDHIAQGERANILRDGLKIVIAGAPNSGKSSIMNRLAGKSVAIVMEEAGTTRDALEIRLVLGGLPVFLTDTAGLRETENKIEQLGIEIAKQHIVDADLVILVYDMGNPKEVNLPETSAEIWHVGNKLDLYEEENKKTWTIQFSALTGLNFDYFIKELESFCLRRVSEIGNLFPARKRQLQLLKEAIREIEASINYRSLDLSLHAEHLRCASVFLGKITGDIDVEDLLDIIFSEFCIGK.

Residues R20, E77, and K117 each coordinate (6S)-5-formyl-5,6,7,8-tetrahydrofolate. Residues 214–360 enclose the TrmE-type G domain; the sequence is GLKIVIAGAP…FIKELESFCL (147 aa). GTP is bound by residues 224 to 229, 243 to 249, and 268 to 271; these read NSGKSS, MEEAGTT, and DTAG. Residues S228 and T249 each coordinate Mg(2+). K436 is a binding site for (6S)-5-formyl-5,6,7,8-tetrahydrofolate.

Belongs to the TRAFAC class TrmE-Era-EngA-EngB-Septin-like GTPase superfamily. TrmE GTPase family. Homodimer. Heterotetramer of two MnmE and two MnmG subunits. It depends on K(+) as a cofactor.

The protein resides in the cytoplasm. Its function is as follows. Exhibits a very high intrinsic GTPase hydrolysis rate. Involved in the addition of a carboxymethylaminomethyl (cmnm) group at the wobble position (U34) of certain tRNAs, forming tRNA-cmnm(5)s(2)U34. The protein is tRNA modification GTPase MnmE of Bartonella quintana (strain Toulouse) (Rochalimaea quintana).